We begin with the raw amino-acid sequence, 243 residues long: Phomoidride biosynthesis cluster protein B (243 aa).

Belongs to the tstB family.

Functionally, phosphatidylethanolamine-binding protein; part of the gene cluster that mediates the biosynthesis of the antihypercholesterolemic agents phomoidrides which are dimeric anhydrides. Within the pathway, tstB is not essential for dimerization and its function has still to be determined. The pathway begins with the highly reducing polyketide synthase tstA that catalyzes the formation of a C12-fatty acyl-ACP, starting from one acetate and 5 malonate units. The hydrolase tstM is involved in the release of the C12-fatty acyl chain from phiA. The alkylcitrate synthase (ACS) tstJ and the alkylcitrate dehydratase (ACDH) tstI then give rise to decarboxylated monomeric anhydrides by coupling the C12-fatty acyl chain with oxalacetic acid. The cyclase tstC is responsible for the dimerization of the monomeric anhydrides which leads to the production of prephomoidride that contains the characteristic bicyclo[4.3.1]deca-1,6-diene system of phomoidrides. Iterative oxidation catalyzed by the alpha-ketoglutarate-dependent dioxygenase tstK produced then phomoidride A. Finally, the methyltransferase tstE converts phomoidride A to phomoidride B via an acetalization reaction. The phosphatidylethanolamine-binding protein tstB and tstN are not essential for dimerization and their functions have still to be determined. The polypeptide is Phomoidride biosynthesis cluster protein B (Talaromyces stipitatus (strain ATCC 10500 / CBS 375.48 / QM 6759 / NRRL 1006) (Penicillium stipitatum)).